A 148-amino-acid polypeptide reads, in one-letter code: Large ribosomal subunit protein bL9 (148 aa).

Belongs to the bacterial ribosomal protein bL9 family.

Functionally, binds to the 23S rRNA. In Aliarcobacter butzleri (strain RM4018) (Arcobacter butzleri), this protein is Large ribosomal subunit protein bL9.